Consider the following 290-residue polypeptide: UPF0761 membrane protein YihY (290 aa).

The next 6 helical transmembrane spans lie at 44-64, 104-124, 140-160, 183-203, 210-230, and 244-264; these read LLSL…FPMF, VGAC…DSAL, FAVY…SLAI, IFPL…VPTI, AIVG…GFAL, and VLAV…IVLL.

This sequence belongs to the UPF0761 family.

It is found in the cell inner membrane. The protein is UPF0761 membrane protein YihY of Escherichia coli O1:K1 / APEC.